The primary structure comprises 444 residues: P2X purinoceptor 5 (444 aa).

The Cytoplasmic portion of the chain corresponds to 1-30 (MGQAGCKGLCLSLFDYKTEKYVIAKNKKVG). A helical membrane pass occupies residues 31-51 (LLYRLLQASILAYLVVWVFLI). The Extracellular segment spans residues 52–319 (KKGYQDVDTS…RTLMKAYGIR (268 aa)). N77 carries an N-linked (GlcNAc...) asparagine glycan. Intrachain disulfides connect C118–C169, C129–C152, and C135–C163. N202 carries an N-linked (GlcNAc...) asparagine glycan. Cystine bridges form between C220–C229 and C263–C272. A helical transmembrane segment spans residues 320 to 362 (FDVMVNGKAGKFSIIPTIINVGSGVALMGAGAFFCDLVLIYLI). The Cytoplasmic segment spans residues 363-444 (KKREFYRDKK…PQLLEPHRST (82 aa)). Residues 378-444 (GLEDSSQEAE…PQLLEPHRST (67 aa)) form a disordered region.

It belongs to the P2X receptor family. Functional P2XRs are organized as homomeric and heteromeric trimers. Homotrimer. Forms heterotrimer with P2RX1. Expressed at high levels in brain and immune system.

The protein resides in the cell membrane. The enzyme catalyses Na(+)(in) = Na(+)(out). The catalysed reaction is Ca(2+)(in) = Ca(2+)(out). It catalyses the reaction chloride(in) = chloride(out). With respect to regulation, activated by ATP. Slowly desensitizing. Sensitive to the ATP agonist alpha/beta-methylene-ATP. ATP-gated nonselective transmembrane cation channel permeable to potassium, sodium and calcium. Unlike other P2RX receptors, the P2X5 receptor is also permeable to chloride. May play a supporting role in the inflammatory response. Functionally, non-functional. The sequence is that of P2X purinoceptor 5 from Homo sapiens (Human).